A 935-amino-acid chain; its full sequence is Bifunctional alpha-galactosidase/sucrose kinase AgaSK (935 aa).

Residues 1–720 (MAIIYNPNKK…EAYQFAFTEL (720 aa)) form an alpha-galactosidase region. 3 residues coordinate Mg(2+): Glu-176, Glu-277, and Phe-280. Substrate contacts are provided by residues 366–367 (DD), Arg-443, 476–480 (KWDMN), and 518–521 (CSGG). Asp-526 functions as the Nucleophile in the catalytic mechanism. Residue Asp-540 participates in substrate binding. The Proton donor/acceptor role is filled by Glu-606. A sucrose kinase region spans residues 721–935 (KEAGRLYEKV…VGKDGSVYEQ (215 aa)). ATP is bound by residues 748–752 (GGSGS) and Ala-824.

In the N-terminal section; belongs to the glycosyl hydrolase 36 family. It in the C-terminal section; belongs to the uridine kinase family. In terms of assembly, homotetramer. Mg(2+) is required as a cofactor.

It catalyses the reaction Hydrolysis of terminal, non-reducing alpha-D-galactose residues in alpha-D-galactosides, including galactose oligosaccharides, galactomannans and galactolipids.. Bifunctional enzyme with alpha-galactosidase and sucrose kinase activities. Produces sucrose-6-phosphate directly from raffinose. Binds ATP. Phosphorylates sucrose specifically on the C6 position of glucose in the presence of ATP. Hydrolyzes melibiose, raffinose, stachyose and synthetic substrate p-nitrophenyl-alpha-D-galactopyranoside with high activity. Low activity against locust bean gum, guar gum and synthetic substrates xylose alpha-D-4-nitrophenol, glucose alpha-D-4-nitrophenol and o-nitrophenyl-alpha-D-galactopyranoside. The polypeptide is Bifunctional alpha-galactosidase/sucrose kinase AgaSK (Mediterraneibacter gnavus (Ruminococcus gnavus)).